The following is a 381-amino-acid chain: MRGFTLPVWVVAAAKAAVKVLIGESWQSHEVIELLNNEESIVVPIRSASILDNGEKALGITNCDPGECLDLTRGLEIWVCLRYIENQQIISSDGLELEPWLKIIPGYGVGKFDLTNDISISEFARQLLIVNLKPYRKEGYSLNLEIIFPSGQELAEKTSNHAFGVVDGLALIGTQADVQESASPKKLQSTIHALRSRCAESSFTGSLIFVIGENGLDLALQYGIDSSKIIKTGNWLGPLLVAAAQEKVQQLLIFGYHGKLIKLAGGVFHTHHHLADNRLETLIAFAVKERIPLSLIKEFEEAVSIEAALSILENKDISTAKKLWKRLAVEIEKRSIDYVKRYETSSIEIGAVMFDRARKIRWAGNYALKQINSFGLKLEDY.

Belongs to the CbiD family.

It carries out the reaction Co-precorrin-5B + S-adenosyl-L-methionine = Co-precorrin-6A + S-adenosyl-L-homocysteine. Its pathway is cofactor biosynthesis; adenosylcobalamin biosynthesis; cob(II)yrinate a,c-diamide from sirohydrochlorin (anaerobic route): step 6/10. Its function is as follows. Catalyzes the methylation of C-1 in cobalt-precorrin-5B to form cobalt-precorrin-6A. The sequence is that of Cobalt-precorrin-5B C(1)-methyltransferase from Prochlorococcus marinus (strain SARG / CCMP1375 / SS120).